The primary structure comprises 218 residues: Octanoyltransferase (218 aa).

A BPL/LPL catalytic domain is found at 45–218 (AGTADELWLL…TDALQRAIYS (174 aa)). Residues 84–91 (RGGQITYH), 151–153 (ALG), and 164–166 (GLA) contribute to the substrate site. Catalysis depends on Cys-182, which acts as the Acyl-thioester intermediate.

The protein belongs to the LipB family.

Its subcellular location is the cytoplasm. The enzyme catalyses octanoyl-[ACP] + L-lysyl-[protein] = N(6)-octanoyl-L-lysyl-[protein] + holo-[ACP] + H(+). Its pathway is protein modification; protein lipoylation via endogenous pathway; protein N(6)-(lipoyl)lysine from octanoyl-[acyl-carrier-protein]: step 1/2. Catalyzes the transfer of endogenously produced octanoic acid from octanoyl-acyl-carrier-protein onto the lipoyl domains of lipoate-dependent enzymes. Lipoyl-ACP can also act as a substrate although octanoyl-ACP is likely to be the physiological substrate. In Thiobacillus denitrificans (strain ATCC 25259 / T1), this protein is Octanoyltransferase.